The chain runs to 556 residues: Guanosine-diphosphatase (556 aa).

Topologically, residues 1–12 (MTPTMKSIARRK) are cytoplasmic. A helical; Signal-anchor for type II membrane protein membrane pass occupies residues 13–33 (ALLIALSIFAVTFILWNGFPG). The Lumenal portion of the chain corresponds to 34–556 (SSNRPLPSSN…GWNCNVKEEI (523 aa)). Glu256 acts as the Proton acceptor in catalysis. Asn372 is a glycosylation site (N-linked (GlcNAc...) asparagine).

It belongs to the GDA1/CD39 NTPase family. It depends on Ca(2+) as a cofactor. The cofactor is Mn(2+).

It is found in the golgi apparatus membrane. It catalyses the reaction GDP + H2O = GMP + phosphate + H(+). The protein operates within protein modification; protein glycosylation. Its function is as follows. After transfer of sugars to endogenous macromolecular acceptors, the enzyme converts nucleoside diphosphates to nucleoside monophosphates which in turn exit the Golgi lumen in a coupled antiporter reaction, allowing entry of additional nucleotide sugar from the cytosol. The sequence is that of Guanosine-diphosphatase (gdp1) from Schizosaccharomyces pombe (strain 972 / ATCC 24843) (Fission yeast).